We begin with the raw amino-acid sequence, 133 residues long: Hydrogenase maturation factor HypA (133 aa).

Ni(2+) is bound at residue histidine 2. The Zn(2+) site is built by cysteine 73, cysteine 75, cysteine 105, and cysteine 108.

The protein belongs to the HypA/HybF family.

Involved in the maturation of [NiFe] hydrogenases. Required for nickel insertion into the metal center of the hydrogenase. This chain is Hydrogenase maturation factor HypA, found in Methanosarcina acetivorans (strain ATCC 35395 / DSM 2834 / JCM 12185 / C2A).